Consider the following 249-residue polypeptide: 5'-nucleotidase SurE (249 aa).

The a divalent metal cation site is built by Asp-8, Asp-9, Ser-39, and Asn-91.

This sequence belongs to the SurE nucleotidase family. A divalent metal cation is required as a cofactor.

It is found in the cytoplasm. The catalysed reaction is a ribonucleoside 5'-phosphate + H2O = a ribonucleoside + phosphate. Functionally, nucleotidase that shows phosphatase activity on nucleoside 5'-monophosphates. The protein is 5'-nucleotidase SurE of Pseudomonas fluorescens (strain Pf0-1).